The chain runs to 320 residues: Biotin synthase 2 (320 aa).

The Radical SAM core domain maps to Asn-34–Arg-261. [4Fe-4S] cluster-binding residues include Cys-49, Cys-53, and Cys-56. [2Fe-2S] cluster-binding residues include Cys-93, Cys-124, Cys-184, and Arg-256.

This sequence belongs to the radical SAM superfamily. Biotin synthase family. As to quaternary structure, homodimer. The cofactor is [4Fe-4S] cluster. It depends on [2Fe-2S] cluster as a cofactor.

It catalyses the reaction (4R,5S)-dethiobiotin + (sulfur carrier)-SH + 2 reduced [2Fe-2S]-[ferredoxin] + 2 S-adenosyl-L-methionine = (sulfur carrier)-H + biotin + 2 5'-deoxyadenosine + 2 L-methionine + 2 oxidized [2Fe-2S]-[ferredoxin]. Its pathway is cofactor biosynthesis; biotin biosynthesis; biotin from 7,8-diaminononanoate: step 2/2. Functionally, catalyzes the conversion of dethiobiotin (DTB) to biotin by the insertion of a sulfur atom into dethiobiotin via a radical-based mechanism. The sequence is that of Biotin synthase 2 from Paracoccus denitrificans (strain Pd 1222).